The primary structure comprises 181 residues: UPF0302 protein ABC1905 (181 aa).

Belongs to the UPF0302 family.

The sequence is that of UPF0302 protein ABC1905 from Shouchella clausii (strain KSM-K16) (Alkalihalobacillus clausii).